Consider the following 156-residue polypeptide: ATP synthase subunit b (156 aa).

A helical membrane pass occupies residues 7-27 (LFVQAIVFLILVLFTMKFVWP).

This sequence belongs to the ATPase B chain family. In terms of assembly, F-type ATPases have 2 components, F(1) - the catalytic core - and F(0) - the membrane proton channel. F(1) has five subunits: alpha(3), beta(3), gamma(1), delta(1), epsilon(1). F(0) has three main subunits: a(1), b(2) and c(10-14). The alpha and beta chains form an alternating ring which encloses part of the gamma chain. F(1) is attached to F(0) by a central stalk formed by the gamma and epsilon chains, while a peripheral stalk is formed by the delta and b chains.

It is found in the cell inner membrane. Functionally, f(1)F(0) ATP synthase produces ATP from ADP in the presence of a proton or sodium gradient. F-type ATPases consist of two structural domains, F(1) containing the extramembraneous catalytic core and F(0) containing the membrane proton channel, linked together by a central stalk and a peripheral stalk. During catalysis, ATP synthesis in the catalytic domain of F(1) is coupled via a rotary mechanism of the central stalk subunits to proton translocation. Its function is as follows. Component of the F(0) channel, it forms part of the peripheral stalk, linking F(1) to F(0). The protein is ATP synthase subunit b of Paracidovorax citrulli (strain AAC00-1) (Acidovorax citrulli).